The sequence spans 281 residues: Undecaprenyl-diphosphatase (281 aa).

A run of 7 helical transmembrane segments spans residues isoleucine 4–isoleucine 24, alanine 46–phenylalanine 63, phenylalanine 83–lysine 103, valine 108–tryptophan 128, alanine 187–tyrosine 207, glutamate 222–valine 242, and phenylalanine 257–isoleucine 277.

The protein belongs to the UppP family.

The protein resides in the cell inner membrane. The catalysed reaction is di-trans,octa-cis-undecaprenyl diphosphate + H2O = di-trans,octa-cis-undecaprenyl phosphate + phosphate + H(+). Its function is as follows. Catalyzes the dephosphorylation of undecaprenyl diphosphate (UPP). Confers resistance to bacitracin. This chain is Undecaprenyl-diphosphatase, found in Polynucleobacter necessarius subsp. necessarius (strain STIR1).